The sequence spans 109 residues: A-type ATP synthase subunit F (109 aa).

The protein belongs to the V-ATPase F subunit family. In terms of assembly, has multiple subunits with at least A(3), B(3), C, D, E, F, H, I and proteolipid K(x).

It localises to the cell membrane. Its function is as follows. Component of the A-type ATP synthase that produces ATP from ADP in the presence of a proton gradient across the membrane. The protein is A-type ATP synthase subunit F of Halorubrum lacusprofundi (strain ATCC 49239 / DSM 5036 / JCM 8891 / ACAM 34).